A 235-amino-acid chain; its full sequence is Phosphoribosylaminoimidazole-succinocarboxamide synthase (235 aa).

The protein belongs to the SAICAR synthetase family.

The enzyme catalyses 5-amino-1-(5-phospho-D-ribosyl)imidazole-4-carboxylate + L-aspartate + ATP = (2S)-2-[5-amino-1-(5-phospho-beta-D-ribosyl)imidazole-4-carboxamido]succinate + ADP + phosphate + 2 H(+). It participates in purine metabolism; IMP biosynthesis via de novo pathway; 5-amino-1-(5-phospho-D-ribosyl)imidazole-4-carboxamide from 5-amino-1-(5-phospho-D-ribosyl)imidazole-4-carboxylate: step 1/2. This chain is Phosphoribosylaminoimidazole-succinocarboxamide synthase, found in Streptococcus gordonii (strain Challis / ATCC 35105 / BCRC 15272 / CH1 / DL1 / V288).